The following is a 510-amino-acid chain: Myosin-binding protein C, cardiac-type (510 aa).

3 consecutive Ig-like C2-type domains span residues 177 to 269 (KKST…VKEP), 270 to 347 (PYSS…TVKT), and 378 to 438 (RDQA…SFIP).

Belongs to the immunoglobulin superfamily. MyBP family. Heart.

Functionally, thick filament-associated protein located in the crossbridge region of vertebrate striated muscle a bands. In vitro it binds MHC, F-actin and native thin filaments, and modifies the activity of actin-activated myosin ATPase. It may modulate muscle contraction or may play a more structural role. This is Myosin-binding protein C, cardiac-type from Ambystoma mexicanum (Axolotl).